We begin with the raw amino-acid sequence, 150 residues long: Deoxyuridine 5'-triphosphate nucleotidohydrolase (150 aa).

Substrate is bound by residues 69–71 (RSG), Asn-82, 86–88 (LID), and Met-96.

It belongs to the dUTPase family. Mg(2+) serves as cofactor.

It carries out the reaction dUTP + H2O = dUMP + diphosphate + H(+). The protein operates within pyrimidine metabolism; dUMP biosynthesis; dUMP from dCTP (dUTP route): step 2/2. Its function is as follows. This enzyme is involved in nucleotide metabolism: it produces dUMP, the immediate precursor of thymidine nucleotides and it decreases the intracellular concentration of dUTP so that uracil cannot be incorporated into DNA. The sequence is that of Deoxyuridine 5'-triphosphate nucleotidohydrolase from Alcanivorax borkumensis (strain ATCC 700651 / DSM 11573 / NCIMB 13689 / SK2).